The following is a 251-amino-acid chain: Ubiquinone/menaquinone biosynthesis C-methyltransferase UbiE (251 aa).

Residues Thr74, Asp95, and 123-124 (NA) contribute to the S-adenosyl-L-methionine site.

It belongs to the class I-like SAM-binding methyltransferase superfamily. MenG/UbiE family.

The catalysed reaction is a 2-demethylmenaquinol + S-adenosyl-L-methionine = a menaquinol + S-adenosyl-L-homocysteine + H(+). The enzyme catalyses a 2-methoxy-6-(all-trans-polyprenyl)benzene-1,4-diol + S-adenosyl-L-methionine = a 5-methoxy-2-methyl-3-(all-trans-polyprenyl)benzene-1,4-diol + S-adenosyl-L-homocysteine + H(+). Its pathway is quinol/quinone metabolism; menaquinone biosynthesis; menaquinol from 1,4-dihydroxy-2-naphthoate: step 2/2. It functions in the pathway cofactor biosynthesis; ubiquinone biosynthesis. Methyltransferase required for the conversion of demethylmenaquinol (DMKH2) to menaquinol (MKH2) and the conversion of 2-polyprenyl-6-methoxy-1,4-benzoquinol (DDMQH2) to 2-polyprenyl-3-methyl-6-methoxy-1,4-benzoquinol (DMQH2). The sequence is that of Ubiquinone/menaquinone biosynthesis C-methyltransferase UbiE from Pseudoalteromonas translucida (strain TAC 125).